The sequence spans 674 residues: MMRLRGSAMLRELLLRPPAAVGAVLRRAQPLGTLCRRPRGGSRPTAGLVAAARLHPWWGGGGRAKGPGAGGLSSSPSEILQELGKGGTPPQQQQQQQQQPGASPPAAPGPKDSPGETDAFGNSEGKEMVAAGDNKIKQGLLPSLEDLLFYTIAEGQEKIPVHKFITALKSTGLRTSDPRLKECMDMLRLTLQTTSDGVMLDKDLFKKCVQSNIVLLTQAFRRKFVIPDFMSFTSHIDELYESAKKQSGGKVADYIPQLAKFSPDLWGVSVCTVDGQRHSIGDTKVPFCLQSCVKPLKYAIAVNDLGTEYVHRYVGKEPSGLRFNKLFLNEDDKPHNPMVNAGAIVVTSLIKQGVNNAEKFDYVMQFLNKMAGNEYVGFSNATFQSERESGDRNFAIGYYLKEKKCFPEGTDMVGILDFYFQLCSIEVTCESASVMAATLANGGFCPITGERVLSPEAVRNTLSLMHSCGMYDFSGQFAFHVGLPAKSGVAGGILLVVPNVMGMMCWSPPLDKMGNSVKGIHFCHDLVSLCNFHNYDNLRHFAKKLDPRREGGDQRVKSVINLLFAAYTGDVSALRRFALSAMDMEQRDYDSRTALHVAAAEGHVEVVKFLLEACKVNPFPKDRWNNTPMDEALHFGHHDVFKILQEYQVQYTPQGDSDDGKGNQTVHKNLDGLL.

Residues 1–54 constitute a mitochondrion transit peptide; the sequence is MMRLRGSAMLRELLLRPPAAVGAVLRRAQPLGTLCRRPRGGSRPTAGLVAAARL. The segment at 56-123 is disordered; that stretch reads PWWGGGGRAK…PGETDAFGNS (68 aa). Positions 58–71 are enriched in gly residues; it reads WGGGGRAKGPGAGG. Positions 89–101 are enriched in low complexity; the sequence is PPQQQQQQQQQPG. 2 positions are modified to N6-succinyllysine: K135 and K169. Residue S291 coordinates substrate. K316 carries the post-translational modification N6-acetyllysine. The segment at 320-327 is highly mobile activation loop; the sequence is GLRFNKLF. Residues N340, E386, N393, Y419, Y471, and V489 each contribute to the substrate site. ANK repeat units lie at residues 590–619 and 624–653; these read DSRT…VNPF and WNNT…QYTP. The segment at 652–674 is disordered; it reads TPQGDSDDGKGNQTVHKNLDGLL. At S657 the chain carries Phosphoserine.

The protein belongs to the glutaminase family. Homotetramer, dimer of dimers. The tetramers can assemble into rod-like oligomers (in vitro), but the physiological significance of this is not clear. Interacts with RAF1 and MAP2K2. Interacts with ATCAY; the interaction is direct and may control GLS localization, negatively regulating its activity. Synthesized as a 74-kDa cytosolic precursor which is proteolytically processed by the mitochondrial-processing peptidase (MPP) via a 72-kDa intermediate to yield the mature mitochondrial 68- and 65-kDa subunits.

It localises to the mitochondrion. Its subcellular location is the cytoplasm. The protein resides in the cytosol. The protein localises to the mitochondrion matrix. The catalysed reaction is L-glutamine + H2O = L-glutamate + NH4(+). With respect to regulation, isoform 1 and isoform 2 are activated by phosphate, due to increased affinity for glutamine. At phosphate concentrations above 10 mM, isoform 2 is more efficient than isoform 1. Functionally, catalyzes the first reaction in the primary pathway for the renal catabolism of glutamine. Plays a role in maintaining acid-base homeostasis. Regulates the levels of the neurotransmitter glutamate, the main excitatory neurotransmitter in the brain. The polypeptide is Glutaminase kidney isoform, mitochondrial (Gls) (Mus musculus (Mouse)).